The sequence spans 321 residues: Acyl-CoA 5-desaturase AL21 (321 aa).

Helical transmembrane passes span 42–62 and 64–84; these read IFHIILVGGLHVLCLSAPFTF and WSAFWLSLTLYAVCGVFGTTL. Fe cation contacts are provided by His-87, His-92, His-124, His-127, and His-128. Residues 87 to 92 carry the Histidine box-1 motif; it reads HRNLTH. A Histidine box-2 motif is present at residues 124-128; it reads HRYHH. Residues 190–210 form a helical membrane-spanning segment; that stretch reads LQAALLYMFGGFPFIVWGMAV. Fe cation is bound by residues His-227, His-256, His-259, and His-260. The Histidine box-3 signature appears at 256 to 260; it reads HNNHH.

It belongs to the fatty acid desaturase type 1 family. Requires Fe(2+) as cofactor.

It localises to the membrane. The enzyme catalyses (11Z,14Z)-eicosadienoyl-CoA + AH2 + O2 = (5Z,11Z,14Z)-eicosatrienoyl-CoA + A + 2 H2O. It catalyses the reaction (11Z,14Z,17Z)-eicosatrienoyl-CoA + AH2 + O2 = (5Z,11Z,14Z,17Z)-eicosatetraenoyl-CoA + A + 2 H2O. It participates in lipid metabolism; polyunsaturated fatty acid biosynthesis. Its function is as follows. Catalyzes the desaturation of 20:2Delta(11,14) and 20:3Delta(11,14,17) to generate sciadonic acid (20:3Delta(5,11,14)) and juniperonic acid (20:4Delta(5,11,14,17)). The enzyme can also use 16:0 and 18:0 as substrates. This Anemone leveillei (Windflower) protein is Acyl-CoA 5-desaturase AL21.